The following is a 948-amino-acid chain: Phosphoenolpyruvate carboxylase (948 aa).

Catalysis depends on residues H138 and K610.

Belongs to the PEPCase type 1 family. It depends on Mg(2+) as a cofactor.

The catalysed reaction is oxaloacetate + phosphate = phosphoenolpyruvate + hydrogencarbonate. In terms of biological role, forms oxaloacetate, a four-carbon dicarboxylic acid source for the tricarboxylic acid cycle. The polypeptide is Phosphoenolpyruvate carboxylase (Streptococcus sanguinis (strain SK36)).